The following is a 366-amino-acid chain: 3-isopropylmalate dehydrogenase (366 aa).

78–91 (GPQWTHLKGSESPE) provides a ligand contact to NAD(+). Positions 99, 109, 138, and 227 each coordinate substrate. Mg(2+) is bound by residues Asp-227, Asp-251, and Asp-255. Residue 285–297 (GSAPDIAEKNIAN) participates in NAD(+) binding.

It belongs to the isocitrate and isopropylmalate dehydrogenases family. LeuB type 1 subfamily. In terms of assembly, homodimer. The cofactor is Mg(2+). Mn(2+) is required as a cofactor.

The protein localises to the cytoplasm. The enzyme catalyses (2R,3S)-3-isopropylmalate + NAD(+) = 4-methyl-2-oxopentanoate + CO2 + NADH. The protein operates within amino-acid biosynthesis; L-leucine biosynthesis; L-leucine from 3-methyl-2-oxobutanoate: step 3/4. Its function is as follows. Catalyzes the oxidation of 3-carboxy-2-hydroxy-4-methylpentanoate (3-isopropylmalate) to 3-carboxy-4-methyl-2-oxopentanoate. The product decarboxylates to 4-methyl-2 oxopentanoate. The polypeptide is 3-isopropylmalate dehydrogenase (Blochmanniella pennsylvanica (strain BPEN)).